Here is a 58-residue protein sequence, read N- to C-terminus: Putative calcium channel toxin 196 (58 aa).

An N-terminal signal peptide occupies residues 1–16; the sequence is GSLLLVLFLLSVICYA. A propeptide spanning residues 17–26 is cleaved from the precursor; it reads EIAAGPTKCQ. Cystine bridges form between C25–C38, C31–C43, and C37–C52.

It belongs to the scorpion calcin-like family. KTX subfamily. Expressed by the venom gland.

Its subcellular location is the secreted. In terms of biological role, may inhibit voltage-gated potassium channels Kv1.1/KCNA1, hKv1.2/KCNA2, and Kv1.3/KCNA3. May also increase intracellular calcium release through the activation of nuclear inositol 1,4,5-trisphosphate receptors (ITPR) of cardiomyocytes, thereby causing an increase in the contraction frequency of these cells. This is Putative calcium channel toxin 196 from Lychas mucronatus (Chinese swimming scorpion).